The chain runs to 283 residues: 4-hydroxybenzoate octaprenyltransferase (283 aa).

Transmembrane regions (helical) follow at residues 16 to 36 (PIGT…AGAG), 40 to 60 (LRIV…GCVI), 85 to 105 (ISAT…FGLV), 108 to 128 (LNTE…LYPF), 135 to 155 (LPQI…FTAL), 160 to 180 (WFIA…YDTE), 204 to 224 (FDRL…GWIL), 226 to 246 (LITV…LFAY), and 263 to 283 (FLHN…HYWF).

This sequence belongs to the UbiA prenyltransferase family. Mg(2+) serves as cofactor.

It localises to the cell inner membrane. It carries out the reaction all-trans-octaprenyl diphosphate + 4-hydroxybenzoate = 4-hydroxy-3-(all-trans-octaprenyl)benzoate + diphosphate. It participates in cofactor biosynthesis; ubiquinone biosynthesis. Functionally, catalyzes the prenylation of para-hydroxybenzoate (PHB) with an all-trans polyprenyl group. Mediates the second step in the final reaction sequence of ubiquinone-8 (UQ-8) biosynthesis, which is the condensation of the polyisoprenoid side chain with PHB, generating the first membrane-bound Q intermediate 3-octaprenyl-4-hydroxybenzoate. In Idiomarina loihiensis (strain ATCC BAA-735 / DSM 15497 / L2-TR), this protein is 4-hydroxybenzoate octaprenyltransferase.